A 695-amino-acid polypeptide reads, in one-letter code: DSC E3 ubiquitin ligase complex subunit 1 (695 aa).

The first 25 residues, 1 to 25, serve as a signal peptide directing secretion; the sequence is MDRRRWVPSTPVVTLLLLFMLFAPA. The Lumenal segment spans residues 26–319; it reads PRLPSRNGES…KGPRNFVLEN (294 aa). The chain crosses the membrane as a helical span at residues 320–340; that stretch reads HLVRFSSLYIFIVLSQIFVLL. Residues 341 to 353 are Cytoplasmic-facing; the sequence is RQMRINSPSHVQR. The helical transmembrane segment at 354 to 374 threads the bilayer; that stretch reads LSFLTIAMQAGLDAYIAIFFL. At 375-382 the chain is on the lumenal side; that stretch reads STNAVIEK. A helical transmembrane segment spans residues 383–403; the sequence is GYLPFVSVAFLSLVPSVMFTM. Residues 404–486 lie on the Cytoplasmic side of the membrane; it reads RYLALILRVQ…QRDWSAVCLR (83 aa). The tract at residues 419–473 is disordered; it reads PPAPRPVTNNSSNNNTNQSNASNENSPNAPSAANDNTETTTVNPPQEDDQPMTQH. Over residues 427–454 the composition is skewed to low complexity; sequence NNSSNNNTNQSNASNENSPNAPSAANDN. A helical transmembrane segment spans residues 487–507; the sequence is FYFIILVVCIASLYSAFWPVI. At 508–509 the chain is on the lumenal side; it reads YR. The chain crosses the membrane as a helical span at residues 510–530; the sequence is FYFISALIFTSYSFWIPQIIQ. At 531–540 the chain is on the cytoplasmic side; it reads NVKQGTSRSF. The helical transmembrane segment at 541–561 threads the bilayer; the sequence is TWTYILGASVLRLYLPLAIFI. At 562–572 the chain is on the lumenal side; that stretch reads DSELILGFPPK. Residues 573–593 traverse the membrane as a helical segment; the sequence is YFFALGLVLWMLFQVLVLLVQ. The Cytoplasmic portion of the chain corresponds to 594-695; sequence DTLGPRFFLP…PVCRCHLPAV (102 aa). The segment at 634-689 adopts an RING-type; atypical zinc-finger fold; that stretch reads CPICMQPIELVSTGSTLNPASMMVRRNYMLTPCHHLYHRQCLLQWMETRSICPVCR.

As to quaternary structure, component of the DSC E3 ubiquitin ligase complex composed of dsc1, dsc2, dsc3 and dsc4.

The protein localises to the endoplasmic reticulum membrane. The protein resides in the golgi apparatus membrane. It carries out the reaction S-ubiquitinyl-[E2 ubiquitin-conjugating enzyme]-L-cysteine + [acceptor protein]-L-lysine = [E2 ubiquitin-conjugating enzyme]-L-cysteine + N(6)-ubiquitinyl-[acceptor protein]-L-lysine.. Its pathway is protein modification; protein ubiquitination. Functionally, catalytic component of the DSC E3 ubiquitin ligase complex which is required for the sre1 transcriptional activator proteolytic cleavage to release the soluble transcription factor from the membrane in low oxygen or sterol conditions. The complex also plays an important role in the multivesicular body (MVB) pathway and functions in a post-endoplasmic reticulum pathway for protein degradation. In Schizosaccharomyces pombe (strain 972 / ATCC 24843) (Fission yeast), this protein is DSC E3 ubiquitin ligase complex subunit 1 (dsc1).